The chain runs to 407 residues: 4-hydroxybenzoate polyprenyltransferase, mitochondrial (407 aa).

The N-terminal 20 residues, 1–20, are a transit peptide targeting the mitochondrion; it reads MAFFGLSRVSRRLLKSSVSV. A run of 6 helical transmembrane segments spans residues 137 to 157, 162 to 182, 210 to 230, 254 to 274, 279 to 299, and 330 to 350; these read IGTW…ADPG, FKYM…GCTI, FQGI…LLQL, FTFW…LLGW, GSIA…WTLV, and LWLT…GFSA.

Belongs to the UbiA prenyltransferase family. The cofactor is Mg(2+). As to expression, expressed in flowers.

The protein localises to the mitochondrion inner membrane. It catalyses the reaction an all-trans-polyprenyl diphosphate + 4-hydroxybenzoate = a 4-hydroxy-3-(all-trans-polyprenyl)benzoate + diphosphate. It participates in cofactor biosynthesis; ubiquinone biosynthesis. Catalyzes the prenylation of para-hydroxybenzoate (PHB) with an all-trans polyprenyl group. Mediates the second step in the final reaction sequence of coenzyme Q (CoQ) biosynthesis, which is the condensation of the polyisoprenoid side chain with PHB, generating the first membrane-bound Q intermediate. Required for embryo development. In Arabidopsis thaliana (Mouse-ear cress), this protein is 4-hydroxybenzoate polyprenyltransferase, mitochondrial.